The chain runs to 335 residues: Ketol-acid reductoisomerase (NADP(+)) (335 aa).

Residues Ser5–Thr185 form the KARI N-terminal Rossmann domain. Residues Tyr28–Gln31, Ser56, and Asp86–Gln89 contribute to the NADP(+) site. Residue His111 is part of the active site. Gly137 serves as a coordination point for NADP(+). The KARI C-terminal knotted domain occupies Thr186 to Gly331. Mg(2+)-binding residues include Asp194, Glu198, Glu230, and Glu234. Ser255 contacts substrate.

It belongs to the ketol-acid reductoisomerase family. The cofactor is Mg(2+).

It catalyses the reaction (2R)-2,3-dihydroxy-3-methylbutanoate + NADP(+) = (2S)-2-acetolactate + NADPH + H(+). The enzyme catalyses (2R,3R)-2,3-dihydroxy-3-methylpentanoate + NADP(+) = (S)-2-ethyl-2-hydroxy-3-oxobutanoate + NADPH + H(+). The protein operates within amino-acid biosynthesis; L-isoleucine biosynthesis; L-isoleucine from 2-oxobutanoate: step 2/4. It participates in amino-acid biosynthesis; L-valine biosynthesis; L-valine from pyruvate: step 2/4. Functionally, involved in the biosynthesis of branched-chain amino acids (BCAA). Catalyzes an alkyl-migration followed by a ketol-acid reduction of (S)-2-acetolactate (S2AL) to yield (R)-2,3-dihydroxy-isovalerate. In the isomerase reaction, S2AL is rearranged via a Mg-dependent methyl migration to produce 3-hydroxy-3-methyl-2-ketobutyrate (HMKB). In the reductase reaction, this 2-ketoacid undergoes a metal-dependent reduction by NADPH to yield (R)-2,3-dihydroxy-isovalerate. The sequence is that of Ketol-acid reductoisomerase (NADP(+)) from Saccharolobus islandicus (strain Y.G.57.14 / Yellowstone #1) (Sulfolobus islandicus).